The chain runs to 605 residues: Heparan-sulfate 6-O-sulfotransferase 2 (605 aa).

Topologically, residues methionine 1–proline 4 are cytoplasmic. Positions methionine 1 to proline 66 are disordered. The helical; Signal-anchor for type II membrane protein transmembrane segment at alanine 5–cysteine 27 threads the bilayer. Basic and acidic residues predominate over residues arginine 9–glutamate 18. At proline 28–arginine 605 the chain is on the lumenal side. The N-linked (GlcNAc...) asparagine glycan is linked to asparagine 209. Histidine 233–threonine 241 lines the 3'-phosphoadenylyl sulfate pocket. Residues lysine 263–lysine 264, arginine 280, tryptophan 285, and histidine 290 each bind substrate. Catalysis depends on histidine 290, which acts as the Proton acceptor. Arginine 325 and serine 333 together coordinate 3'-phosphoadenylyl sulfate. Positions 337 and 344 each coordinate substrate. The N-linked (GlcNAc...) asparagine glycan is linked to asparagine 404. Threonine 457–tyrosine 459 contributes to the 3'-phosphoadenylyl sulfate binding site. A glycan (N-linked (GlcNAc...) asparagine) is linked at asparagine 460. Residue arginine 463–alanine 464 coordinates 3'-phosphoadenylyl sulfate. The segment at phenylalanine 530–arginine 605 is disordered. The segment covering glutamine 531 to glutamine 571 has biased composition (low complexity). N-linked (GlcNAc...) asparagine glycosylation is found at asparagine 544, asparagine 556, asparagine 564, asparagine 589, and asparagine 592. A compositionally biased stretch (polar residues) spans lysine 579 to tyrosine 597.

This sequence belongs to the sulfotransferase 6 family.

The protein resides in the membrane. The catalysed reaction is alpha-D-glucosaminyl-[heparan sulfate](n) + 3'-phosphoadenylyl sulfate = 6-sulfo-alpha-D-glucosaminyl-[heparan sulfate](n) + adenosine 3',5'-bisphosphate + H(+). Its function is as follows. 6-O-sulfation enzyme which catalyzes the transfer of sulfate from 3'-phosphoadenosine 5'-phosphosulfate (PAPS) to position 6 of the N-sulfoglucosamine residue (GlcNS) of heparan sulfate. The chain is Heparan-sulfate 6-O-sulfotransferase 2 from Homo sapiens (Human).